Here is a 335-residue protein sequence, read N- to C-terminus: Hsp90 co-chaperone Cdc37-like 1 (335 aa).

Over residues 1–11 (MEQPWPPPGPW) the composition is skewed to pro residues. Residues 1 to 42 (MEQPWPPPGPWSFPRTGGETEEESDLDVSPSSSHYSPVPDGG) are disordered. The interval 2–170 (EQPWPPPGPW…YEQKIRHFGM (169 aa)) is self-association. Residues 27 to 40 (DVSPSSSHYSPVPD) are compositionally biased toward low complexity. Phosphoserine occurs at positions 32 and 88. Residues 84–120 (HNSESLDQEHAKAQTAVSELRQREEEWRQKEEALVQR) are a coiled coil. Positions 147-276 (KTEEEDKSQS…SRVRLYAQSQ (130 aa)) are self-association and interaction with Hsp90. Positions 266 to 335 (KSRVRLYAQS…EDDDRMMDTV (70 aa)) are interaction with Hsp70. The tract at residues 277–335 (SLQPVTVQNHVPHSGVGCIGSLESLPQNPDSLQCCTPAPLCSVDSVVHKEDDDRMMDTV) is required for interaction with STIP1.

Belongs to the CDC37 family. As to quaternary structure, self-associates. Forms complexes with Hsp70 and Hsp90. Interacts with CDC37, FKBP4, PPID and STIP1.

It is found in the cytoplasm. In terms of biological role, co-chaperone that binds to numerous proteins and promotes their interaction with Hsp70 and Hsp90. This Mus musculus (Mouse) protein is Hsp90 co-chaperone Cdc37-like 1 (Cdc37l1).